The sequence spans 368 residues: 1-deoxy-D-xylulose 5-phosphate reductoisomerase (368 aa).

NADPH-binding residues include Thr-7, Gly-8, Ser-9, Ile-10, Gly-31, Lys-32, Asn-33, and Asn-113. 1-deoxy-D-xylulose 5-phosphate is bound at residue Lys-114. Residue Glu-115 coordinates NADPH. Asp-133 lines the Mn(2+) pocket. 1-deoxy-D-xylulose 5-phosphate is bound by residues Ser-134, Glu-135, Ser-158, and His-181. Glu-135 provides a ligand contact to Mn(2+). Residue Gly-187 coordinates NADPH. 4 residues coordinate 1-deoxy-D-xylulose 5-phosphate: Ser-194, Asn-199, Lys-200, and Glu-203. Glu-203 provides a ligand contact to Mn(2+).

Belongs to the DXR family. The cofactor is Mg(2+). Mn(2+) is required as a cofactor.

The enzyme catalyses 2-C-methyl-D-erythritol 4-phosphate + NADP(+) = 1-deoxy-D-xylulose 5-phosphate + NADPH + H(+). The protein operates within isoprenoid biosynthesis; isopentenyl diphosphate biosynthesis via DXP pathway; isopentenyl diphosphate from 1-deoxy-D-xylulose 5-phosphate: step 1/6. In terms of biological role, catalyzes the NADPH-dependent rearrangement and reduction of 1-deoxy-D-xylulose-5-phosphate (DXP) to 2-C-methyl-D-erythritol 4-phosphate (MEP). The chain is 1-deoxy-D-xylulose 5-phosphate reductoisomerase from Helicobacter pylori (strain ATCC 700392 / 26695) (Campylobacter pylori).